Here is a 2339-residue protein sequence, read N- to C-terminus: Inverse autotransporter adhesin YeeJ (2339 aa).

The signal sequence occupies residues 1-26; the sequence is MGIKLRRLTAGICLITQLAFPMAAAA. The region spanning 50–98 is the LysM domain; the sequence is VPYTLGALESAQSVAERFGISVAELRKLNQFRTFARGFDNVRQGDELDV. The interval 125 to 400 is inverse autotransporter; the sequence is TSQQIGSLLA…SRYDLVDRNN (276 aa). The invasin 3 domain stretch occupies residues 513-605; it reads QKDSSVSLST…GVDAAKAPAV (93 aa). 13 consecutive Big-1 domains span residues 721-815, 822-913, 920-1017, 1024-1121, 1128-1221, 1229-1331, 1339-1432, 1439-1535, 1542-1639, 1646-1730, 1746-1837, 1840-1934, and 1942-2034; these read IATL…VSFV, QVDL…VNFI, ALTL…MTFV, VVVL…VTFV, QVVL…VHFI, IIEL…SINV, HLTL…VTYV, EITL…VNFI, QVNL…VTLI, KLAS…PTEV, ITSL…LEAI, KLTL…VKVT, and VASF…ITLV. The segment at 2236–2339 is C-type lectin domain; it reads KSWWVNAGEA…FAYATCYKNL (104 aa).

Belongs to the intimin/invasin family.

Its subcellular location is the cell outer membrane. In terms of biological role, a cryptic inverse autotransporter, it is not expressed in wild-type strain MG1655. Upon overexpression shows increased adherence to polyvinyl chloride (PVC) plates and increased mature biofilm formation. Probably binds peptidoglycan. The polypeptide is Inverse autotransporter adhesin YeeJ (yeeJ) (Escherichia coli (strain K12)).